We begin with the raw amino-acid sequence, 303 residues long: Magainins (303 aa).

The N-terminal stretch at 1–18 (MFKGLFICSLIAVICANA) is a signal peptide. Propeptides lie at residues 19 to 26 (LPQPEASA), 33 to 36 (REVR), 62 to 72 (DAEAVGPEAFA), 79 to 82 (REVR), 108 to 118 (DAEAVGPEAFA), 125 to 128 (REVR), 154 to 164 (DAEAVGPEAFA), 171 to 174 (REVR), 200 to 210 (DAEAVGPEAFA), 217 to 220 (REVR), 246 to 256 (DAEAVGPEAFA), 263 to 266 (REVR), and 292 to 303 (DAEAVDDRRWVE).

It belongs to the gastrin/cholecystokinin family. Magainin subfamily. Synthesized in the stomach and stored in a novel granular multinucleated cell in the gastric mucosa. It is stored as active, processed peptides in large granules within the granular gland secretions of the skin.

The protein resides in the secreted. Functionally, antimicrobial peptides that inhibit the growth of numerous species of bacteria and fungi and induce osmotic lysis of protozoa. Rapidly inactivates channel catfish herpesvirus (ED(50)=48 uM) over a wide temperature range. Magainins are membrane lytic agents. The sequence is that of Magainins (magainins) from Xenopus laevis (African clawed frog).